Consider the following 261-residue polypeptide: SLA class II histocompatibility antigen, DQ haplotype C beta chain (261 aa).

An N-terminal signal peptide occupies residues M1–E31. Residues G32–R126 form a beta-1 region. Topologically, residues G32–K230 are extracellular. 2 disulfide bridges follow: C47–C111 and C149–C205. A glycan (N-linked (GlcNAc...) asparagine) is linked at N51. Residues V127–W220 form a beta-2 region. Residues P129 to S233 form the Ig-like C1-type domain. Positions R221–K230 are connecting peptide. Residues M231 to I251 traverse the membrane as a helical segment. Over R252–R261 the chain is Cytoplasmic.

The protein belongs to the MHC class II family.

It localises to the membrane. In Sus scrofa (Pig), this protein is SLA class II histocompatibility antigen, DQ haplotype C beta chain.